A 255-amino-acid polypeptide reads, in one-letter code: Vitamin B12 import ATP-binding protein BtuD (255 aa).

The 239-residue stretch at M2–Q240 folds into the ABC transporter domain. Residue G30 to S37 participates in ATP binding.

Belongs to the ABC transporter superfamily. Vitamin B12 importer (TC 3.A.1.13.1) family. In terms of assembly, the complex is composed of two ATP-binding proteins (BtuD), two transmembrane proteins (BtuC) and a solute-binding protein (BtuF).

Its subcellular location is the cell inner membrane. It catalyses the reaction an R-cob(III)alamin(out) + ATP + H2O = an R-cob(III)alamin(in) + ADP + phosphate + H(+). Functionally, part of the ABC transporter complex BtuCDF involved in vitamin B12 import. Responsible for energy coupling to the transport system. This is Vitamin B12 import ATP-binding protein BtuD from Vibrio parahaemolyticus serotype O3:K6 (strain RIMD 2210633).